Here is a 462-residue protein sequence, read N- to C-terminus: Argininosuccinate lyase (462 aa).

This sequence belongs to the lyase 1 family. Argininosuccinate lyase subfamily.

The protein localises to the cytoplasm. It carries out the reaction 2-(N(omega)-L-arginino)succinate = fumarate + L-arginine. The protein operates within amino-acid biosynthesis; L-arginine biosynthesis; L-arginine from L-ornithine and carbamoyl phosphate: step 3/3. This is Argininosuccinate lyase from Bacillus cereus (strain ATCC 10987 / NRS 248).